We begin with the raw amino-acid sequence, 141 residues long: Protein E6 (141 aa).

Zinc fingers lie at residues Cys27–Cys64 and Cys101–Cys137.

The protein belongs to the papillomaviridae E6 protein family. In terms of assembly, forms homodimers. Interacts with ubiquitin-protein ligase UBE3A/E6-AP; this interaction stimulates UBE3A ubiquitin activity. Interacts with host BAK1.

It localises to the host cytoplasm. The protein resides in the host nucleus. Plays a major role in the induction and maintenance of cellular transformation. E6 associates with host UBE3A/E6-AP ubiquitin-protein ligase and modulates its activity. Protects host keratinocytes from apoptosis by mediating the degradation of host BAK1. May also inhibit host immune response. The polypeptide is Protein E6 (Homo sapiens (Human)).